Consider the following 347-residue polypeptide: GMP reductase (347 aa).

Position 108–131 (108–131 (ADFEKTKQILDLNPALNFVCIDVA)) interacts with NADP(+). G181 and G183 together coordinate K(+). Catalysis depends on C186, which acts as the Thioimidate intermediate. 216–239 (IVSDGGCTTPGDVAKAFGGGADFV) contributes to the NADP(+) binding site.

The protein belongs to the IMPDH/GMPR family. GuaC type 1 subfamily. As to quaternary structure, homotetramer.

It catalyses the reaction IMP + NH4(+) + NADP(+) = GMP + NADPH + 2 H(+). In terms of biological role, catalyzes the irreversible NADPH-dependent deamination of GMP to IMP. It functions in the conversion of nucleobase, nucleoside and nucleotide derivatives of G to A nucleotides, and in maintaining the intracellular balance of A and G nucleotides. This is GMP reductase from Shigella flexneri.